A 265-amino-acid chain; its full sequence is Glutamate racemase (265 aa).

Substrate-binding positions include 9 to 10 and 41 to 42; these read DS and YS. C73 functions as the Proton donor/acceptor in the catalytic mechanism. Residue 74-75 participates in substrate binding; sequence NT. Residue C184 is the Proton donor/acceptor of the active site. 185–186 lines the substrate pocket; sequence TH.

This sequence belongs to the aspartate/glutamate racemases family.

The catalysed reaction is L-glutamate = D-glutamate. It functions in the pathway cell wall biogenesis; peptidoglycan biosynthesis. Its function is as follows. Provides the (R)-glutamate required for cell wall biosynthesis. This Haemophilus ducreyi (strain 35000HP / ATCC 700724) protein is Glutamate racemase.